A 101-amino-acid chain; its full sequence is Trp operon repressor homolog (101 aa).

A DNA-binding region spans residues 59–82 (QREIQQNLNTSAATITRGSNMIKT).

It belongs to the TrpR family. Homodimer.

The protein resides in the cytoplasm. Its function is as follows. This protein is an aporepressor. When complexed with L-tryptophan it binds the operator region of the trp operon and prevents the initiation of transcription. This is Trp operon repressor homolog from Haemophilus influenzae (strain 86-028NP).